The primary structure comprises 499 residues: Trichoplein keratin filament-binding protein (499 aa).

Coiled coils occupy residues 17 to 143 (LEQQ…LYEQ), 169 to 304 (EQIT…LSAL), and 405 to 485 (NRER…TQRG). The tract at residues 260–426 (RKMEQCRKKT…RQFTSREKKQ (167 aa)) is trichohyalin/plectin homology domain.

The protein belongs to the TCHP family.

The protein localises to the cytoplasm. It localises to the cytoskeleton. Its subcellular location is the microtubule organizing center. It is found in the centrosome. In terms of biological role, may act as a 'capping' or 'branching' protein for keratin filaments in the cell periphery. May regulate K8/K18 filament and desmosome organization mainly at the apical or peripheral regions of simple epithelial cells. The polypeptide is Trichoplein keratin filament-binding protein (Xenopus laevis (African clawed frog)).